A 38-amino-acid polypeptide reads, in one-letter code: MIEPLLCGIVLGLIPVTLLGLFVDAWNQYRRDTVLGDW.

A helical membrane pass occupies residues 5 to 25; that stretch reads LLCGIVLGLIPVTLLGLFVDA.

Belongs to the PetG family. The 4 large subunits of the cytochrome b6-f complex are cytochrome b6, subunit IV (17 kDa polypeptide, PetD), cytochrome f and the Rieske protein, while the 4 small subunits are PetG, PetL, PetM and PetN. The complex functions as a dimer.

The protein localises to the cellular thylakoid membrane. In terms of biological role, component of the cytochrome b6-f complex, which mediates electron transfer between photosystem II (PSII) and photosystem I (PSI), cyclic electron flow around PSI, and state transitions. PetG is required for either the stability or assembly of the cytochrome b6-f complex. In Prochlorococcus marinus (strain MIT 9313), this protein is Cytochrome b6-f complex subunit 5.